Here is a 428-residue protein sequence, read N- to C-terminus: 3-phosphoshikimate 1-carboxyvinyltransferase (428 aa).

Lys21, Ser22, and Arg26 together coordinate 3-phosphoshikimate. Phosphoenolpyruvate is bound at residue Lys21. Phosphoenolpyruvate-binding residues include Gly92 and Arg120. 3-phosphoshikimate-binding residues include Ser165, Gln167, Asp313, and Lys340. Gln167 contacts phosphoenolpyruvate. The active-site Proton acceptor is the Asp313. Phosphoenolpyruvate contacts are provided by Arg344 and Arg386.

This sequence belongs to the EPSP synthase family. In terms of assembly, monomer.

The protein localises to the cytoplasm. It carries out the reaction 3-phosphoshikimate + phosphoenolpyruvate = 5-O-(1-carboxyvinyl)-3-phosphoshikimate + phosphate. It functions in the pathway metabolic intermediate biosynthesis; chorismate biosynthesis; chorismate from D-erythrose 4-phosphate and phosphoenolpyruvate: step 6/7. Its function is as follows. Catalyzes the transfer of the enolpyruvyl moiety of phosphoenolpyruvate (PEP) to the 5-hydroxyl of shikimate-3-phosphate (S3P) to produce enolpyruvyl shikimate-3-phosphate and inorganic phosphate. This is 3-phosphoshikimate 1-carboxyvinyltransferase from Carboxydothermus hydrogenoformans (strain ATCC BAA-161 / DSM 6008 / Z-2901).